A 162-amino-acid chain; its full sequence is Peroxiredoxin-2C (162 aa).

One can recognise a Thioredoxin domain in the interval Ile-4–Leu-162. Cys-51 functions as the Cysteine sulfenic acid (-SOH) intermediate in the catalytic mechanism.

The protein belongs to the peroxiredoxin family. Prx5 subfamily. As to quaternary structure, monomer. In terms of tissue distribution, highly expressed in buds and flowers. Slightly expressed in green tissues. Also detected in pollen.

It is found in the cytoplasm. The catalysed reaction is [glutaredoxin]-dithiol + a hydroperoxide = [glutaredoxin]-disulfide + an alcohol + H2O. Functionally, thiol-specific peroxidase that catalyzes the reduction of hydrogen peroxide and organic hydroperoxides to water and alcohols, respectively. Plays a role in cell protection against oxidative stress by detoxifying peroxides and as sensor of hydrogen peroxide-mediated signaling events. In Arabidopsis thaliana (Mouse-ear cress), this protein is Peroxiredoxin-2C (PRXIIC).